A 328-amino-acid polypeptide reads, in one-letter code: Serine protease 27 (328 aa).

An N-terminal signal peptide occupies residues 1-22 (MRQPHIAALLLLPLLLRSGTEG). A propeptide spans 23-37 (ARTLRACGHPKMFNR) (activation peptide). One can recognise a Peptidase S1 domain in the interval 38–280 (MVGGENALEG…HHKWIHQIIP (243 aa)). Cys63 and Cys79 form a disulfide bridge. Residue His78 is the Charge relay system of the active site. Residue Asn82 is glycosylated (N-linked (GlcNAc...) asparagine). The active-site Charge relay system is Asp127. 3 cysteine pairs are disulfide-bonded: Cys161–Cys238, Cys194–Cys217, and Cys228–Cys256. Ser232 serves as the catalytic Charge relay system.

It belongs to the peptidase S1 family.

Its subcellular location is the secreted. This Mus musculus (Mouse) protein is Serine protease 27 (Prss27).